Reading from the N-terminus, the 289-residue chain is Phosphatidylglycerol--prolipoprotein diacylglyceryl transferase (289 aa).

4 consecutive transmembrane segments (helical) span residues 21-41 (IGPL…LLGI), 53-73 (IDPN…IPAA), 95-115 (IWHG…ALIL), and 122-142 (IPIW…QAIG). R143 lines the a 1,2-diacyl-sn-glycero-3-phospho-(1'-sn-glycerol) pocket. Transmembrane regions (helical) follow at residues 182-202 (PTFL…IWLF), 215-235 (GVMT…IEGL), and 247-267 (IAQM…VWIY).

It belongs to the Lgt family.

Its subcellular location is the cell inner membrane. The enzyme catalyses L-cysteinyl-[prolipoprotein] + a 1,2-diacyl-sn-glycero-3-phospho-(1'-sn-glycerol) = an S-1,2-diacyl-sn-glyceryl-L-cysteinyl-[prolipoprotein] + sn-glycerol 1-phosphate + H(+). It functions in the pathway protein modification; lipoprotein biosynthesis (diacylglyceryl transfer). In terms of biological role, catalyzes the transfer of the diacylglyceryl group from phosphatidylglycerol to the sulfhydryl group of the N-terminal cysteine of a prolipoprotein, the first step in the formation of mature lipoproteins. The chain is Phosphatidylglycerol--prolipoprotein diacylglyceryl transferase from Synechococcus elongatus (strain ATCC 33912 / PCC 7942 / FACHB-805) (Anacystis nidulans R2).